A 246-amino-acid polypeptide reads, in one-letter code: MAFAVIRACSRVGRGGLYKRLGGPPRGTRRQRQRPRQGRQGASRSIAEQRSAAPRPPTGPPARYPSPAASARASEARRHPAADLDPPPGEPQAVASRGTPEPRPPPESPGAPPPPGSAPADGAMAAAKPGELMGICSSYQAVMPHFVCLTDEFPQPVRPAKLPKGKGRLRRPRQSRFKTQPVTFDEIQEVEEEGVSPMEEEKAKKSFLQSLECLRRSTQSLSLQREPLGSCKLRNSLDSSDSDSAL.

Disordered stretches follow at residues C9–A125 and Q155–A203. The span at G27 to Q37 shows a compositional bias: basic residues. Pro residues-rich tracts occupy residues P54 to Y64 and E101 to S117. Residues K161–R176 are compositionally biased toward basic residues. Position 179 is a phosphothreonine (T179). Phosphoserine is present on residues S196, S210, and S220.

Its subcellular location is the cytoplasm. This is an uncharacterized protein from Mus musculus (Mouse).